The primary structure comprises 134 residues: Parvalbumin-like EF-hand-containing protein (134 aa).

EF-hand domains lie at 55 to 90 (QLDD…IPSS) and 96 to 131 (LTDE…EKIP). Asp68, Asp70, Ser72, Phe74, Glu76, Glu79, Asp109, Asp113, and Glu120 together coordinate Ca(2+).

This sequence belongs to the parvalbumin family.

In Homo sapiens (Human), this protein is Parvalbumin-like EF-hand-containing protein.